A 236-amino-acid chain; its full sequence is uncharacterized protein (236 aa).

It localises to the plastid. The protein localises to the chloroplast. This is an uncharacterized protein from Chlorella vulgaris (Green alga).